The following is a 90-amino-acid chain: DNA-binding protein HU-alpha (90 aa).

This sequence belongs to the bacterial histone-like protein family. In terms of assembly, heterodimer of an alpha and a beta chain.

Functionally, histone-like DNA-binding protein which is capable of wrapping DNA to stabilize it, and thus to prevent its denaturation under extreme environmental conditions. The chain is DNA-binding protein HU-alpha (hupA) from Vibrio proteolyticus (Aeromonas proteolytica).